We begin with the raw amino-acid sequence, 258 residues long: Protein U52 (258 aa).

It belongs to the herpesviridae UL79 family.

The protein is Protein U52 (U52) of Human herpesvirus 6B (strain Z29) (HHV-6 variant B).